Here is a 245-residue protein sequence, read N- to C-terminus: Alpha carbonic anhydrase 2 (245 aa).

The N-terminal stretch at 1 to 23 (MDKISIRCFIFLVLTSFVTTVSC) is a signal peptide. Residues 37-245 (HEFSYEWNQE…THRYFLLFFT (209 aa)) form the Alpha-carbonic anhydrase domain. C62 and C222 are joined by a disulfide. An N-linked (GlcNAc...) asparagine glycan is attached at N95. H103 acts as the Proton acceptor in catalysis. A glycan (N-linked (GlcNAc...) asparagine) is linked at N120. Zn(2+)-binding residues include H130, H132, and H149. N-linked (GlcNAc...) asparagine glycosylation is present at N156. 218-219 (TT) is a substrate binding site.

The protein belongs to the alpha-class carbonic anhydrase family. The cofactor is Zn(2+). In terms of processing, N-glycosylated. Expressed in stems and roots.

The protein localises to the plastid. It localises to the chloroplast stroma. It carries out the reaction hydrogencarbonate + H(+) = CO2 + H2O. Its function is as follows. Reversible hydration of carbon dioxide. This Arabidopsis thaliana (Mouse-ear cress) protein is Alpha carbonic anhydrase 2 (ACA2).